Here is a 353-residue protein sequence, read N- to C-terminus: Paraneoplastic antigen Ma1 homolog (353 aa).

Belongs to the PNMA family. Predominantly expressed in testis. Very low levels in the brain, including in the piriform cortex, hippocampus and some subcortical nuclei.

It localises to the nucleus. It is found in the nucleolus. The sequence is that of Paraneoplastic antigen Ma1 homolog (Pnma1) from Mus musculus (Mouse).